Reading from the N-terminus, the 175-residue chain is Translation initiation factor IF-3, chloroplastic (175 aa).

It belongs to the IF-3 family. In terms of assembly, monomer.

It localises to the plastid. Its subcellular location is the chloroplast. Its function is as follows. IF-3 binds to the 30S ribosomal subunit and shifts the equilibrium between 70S ribosomes and their 50S and 30S subunits in favor of the free subunits, thus enhancing the availability of 30S subunits on which protein synthesis initiation begins. The protein is Translation initiation factor IF-3, chloroplastic of Cyanidioschyzon merolae (strain NIES-3377 / 10D) (Unicellular red alga).